Here is a 403-residue protein sequence, read N- to C-terminus: 8-amino-7-oxononanoate synthase (403 aa).

Residue Arg22 participates in substrate binding. Gly109 to Phe110 serves as a coordination point for pyridoxal 5'-phosphate. Position 134 (His134) interacts with substrate. 3 residues coordinate pyridoxal 5'-phosphate: Ser178, His206, and Thr232. N6-(pyridoxal phosphate)lysine is present on Lys235. Substrate is bound at residue Thr348. The segment at Ser383–Gln403 is disordered. Residues Asp385–Ser394 show a composition bias toward polar residues.

This sequence belongs to the class-II pyridoxal-phosphate-dependent aminotransferase family. BioF subfamily. In terms of assembly, homodimer. Pyridoxal 5'-phosphate is required as a cofactor.

It carries out the reaction 6-carboxyhexanoyl-[ACP] + L-alanine + H(+) = (8S)-8-amino-7-oxononanoate + holo-[ACP] + CO2. Its pathway is cofactor biosynthesis; biotin biosynthesis. Functionally, catalyzes the decarboxylative condensation of pimeloyl-[acyl-carrier protein] and L-alanine to produce 8-amino-7-oxononanoate (AON), [acyl-carrier protein], and carbon dioxide. The protein is 8-amino-7-oxononanoate synthase of Vibrio atlanticus (strain LGP32) (Vibrio splendidus (strain Mel32)).